We begin with the raw amino-acid sequence, 211 residues long: Thiamine-phosphate synthase (211 aa).

Residues 41–45 (QYRDK) and N73 contribute to the 4-amino-2-methyl-5-(diphosphooxymethyl)pyrimidine site. Mg(2+) contacts are provided by D74 and D93. T112 lines the 4-amino-2-methyl-5-(diphosphooxymethyl)pyrimidine pocket. 139-141 (SPT) is a binding site for 2-[(2R,5Z)-2-carboxy-4-methylthiazol-5(2H)-ylidene]ethyl phosphate. A 4-amino-2-methyl-5-(diphosphooxymethyl)pyrimidine-binding site is contributed by K142. 2-[(2R,5Z)-2-carboxy-4-methylthiazol-5(2H)-ylidene]ethyl phosphate contacts are provided by residues G169 and 189–190 (VS).

This sequence belongs to the thiamine-phosphate synthase family. Mg(2+) is required as a cofactor.

The catalysed reaction is 2-[(2R,5Z)-2-carboxy-4-methylthiazol-5(2H)-ylidene]ethyl phosphate + 4-amino-2-methyl-5-(diphosphooxymethyl)pyrimidine + 2 H(+) = thiamine phosphate + CO2 + diphosphate. It catalyses the reaction 2-(2-carboxy-4-methylthiazol-5-yl)ethyl phosphate + 4-amino-2-methyl-5-(diphosphooxymethyl)pyrimidine + 2 H(+) = thiamine phosphate + CO2 + diphosphate. It carries out the reaction 4-methyl-5-(2-phosphooxyethyl)-thiazole + 4-amino-2-methyl-5-(diphosphooxymethyl)pyrimidine + H(+) = thiamine phosphate + diphosphate. It functions in the pathway cofactor biosynthesis; thiamine diphosphate biosynthesis; thiamine phosphate from 4-amino-2-methyl-5-diphosphomethylpyrimidine and 4-methyl-5-(2-phosphoethyl)-thiazole: step 1/1. Condenses 4-methyl-5-(beta-hydroxyethyl)thiazole monophosphate (THZ-P) and 2-methyl-4-amino-5-hydroxymethyl pyrimidine pyrophosphate (HMP-PP) to form thiamine monophosphate (TMP). In Thioalkalivibrio sulfidiphilus (strain HL-EbGR7), this protein is Thiamine-phosphate synthase.